A 228-amino-acid polypeptide reads, in one-letter code: Ribonuclease HII (228 aa).

An RNase H type-2 domain is found at 1–210 (MKIAGIDEAG…LKKIAEKVES (210 aa)). A divalent metal cation is bound by residues Asp-7, Glu-8, and Asp-105.

This sequence belongs to the RNase HII family. As to quaternary structure, monomer. The cofactor is Mn(2+). Mg(2+) serves as cofactor.

It is found in the cytoplasm. It catalyses the reaction Endonucleolytic cleavage to 5'-phosphomonoester.. Functionally, endonuclease that specifically degrades the RNA of RNA-DNA hybrids. The polypeptide is Ribonuclease HII (rnhB) (Thermococcus kodakarensis (strain ATCC BAA-918 / JCM 12380 / KOD1) (Pyrococcus kodakaraensis (strain KOD1))).